Reading from the N-terminus, the 342-residue chain is Holliday junction branch migration complex subunit RuvB (342 aa).

The segment at 1-179 is large ATPase domain (RuvB-L); the sequence is MTNILSPEKS…FGIPMRLNFY (179 aa). ATP contacts are provided by residues isoleucine 18, arginine 19, glycine 60, lysine 63, threonine 64, threonine 65, 126-128, arginine 169, tyrosine 179, and arginine 216; that span reads EDF. Threonine 64 is a binding site for Mg(2+). Residues 180–250 form a small ATPAse domain (RuvB-S) region; sequence NTGELKKVLN…ISDFGLNRLE (71 aa). The segment at 253–342 is head domain (RuvB-H); that stretch reads RIGLDSNDYR…HQFNIFNENE (90 aa). Arginine 289, arginine 308, and arginine 313 together coordinate DNA.

Belongs to the RuvB family. In terms of assembly, homohexamer. Forms an RuvA(8)-RuvB(12)-Holliday junction (HJ) complex. HJ DNA is sandwiched between 2 RuvA tetramers; dsDNA enters through RuvA and exits via RuvB. An RuvB hexamer assembles on each DNA strand where it exits the tetramer. Each RuvB hexamer is contacted by two RuvA subunits (via domain III) on 2 adjacent RuvB subunits; this complex drives branch migration. In the full resolvosome a probable DNA-RuvA(4)-RuvB(12)-RuvC(2) complex forms which resolves the HJ.

It is found in the cytoplasm. It catalyses the reaction ATP + H2O = ADP + phosphate + H(+). Functionally, the RuvA-RuvB-RuvC complex processes Holliday junction (HJ) DNA during genetic recombination and DNA repair, while the RuvA-RuvB complex plays an important role in the rescue of blocked DNA replication forks via replication fork reversal (RFR). RuvA specifically binds to HJ cruciform DNA, conferring on it an open structure. The RuvB hexamer acts as an ATP-dependent pump, pulling dsDNA into and through the RuvAB complex. RuvB forms 2 homohexamers on either side of HJ DNA bound by 1 or 2 RuvA tetramers; 4 subunits per hexamer contact DNA at a time. Coordinated motions by a converter formed by DNA-disengaged RuvB subunits stimulates ATP hydrolysis and nucleotide exchange. Immobilization of the converter enables RuvB to convert the ATP-contained energy into a lever motion, pulling 2 nucleotides of DNA out of the RuvA tetramer per ATP hydrolyzed, thus driving DNA branch migration. The RuvB motors rotate together with the DNA substrate, which together with the progressing nucleotide cycle form the mechanistic basis for DNA recombination by continuous HJ branch migration. Branch migration allows RuvC to scan DNA until it finds its consensus sequence, where it cleaves and resolves cruciform DNA. This chain is Holliday junction branch migration complex subunit RuvB, found in Rickettsia conorii (strain ATCC VR-613 / Malish 7).